The following is a 122-amino-acid chain: Small ribosomal subunit protein uS13 (122 aa).

The segment at 94-122 (KGLPVRGQRTHTNARTRKGPRRAIAGKKK) is disordered.

Belongs to the universal ribosomal protein uS13 family. In terms of assembly, part of the 30S ribosomal subunit. Forms a loose heterodimer with protein S19. Forms two bridges to the 50S subunit in the 70S ribosome.

Located at the top of the head of the 30S subunit, it contacts several helices of the 16S rRNA. In the 70S ribosome it contacts the 23S rRNA (bridge B1a) and protein L5 of the 50S subunit (bridge B1b), connecting the 2 subunits; these bridges are implicated in subunit movement. Contacts the tRNAs in the A and P-sites. The protein is Small ribosomal subunit protein uS13 of Syntrophus aciditrophicus (strain SB).